The sequence spans 541 residues: GMP synthase [glutamine-hydrolyzing] (541 aa).

The Glutamine amidotransferase type-1 domain occupies 15 to 209 (TILTLDFGSQ…AVNICGCKQN (195 aa)). The Nucleophile role is filled by cysteine 91. Residues histidine 183 and glutamate 185 contribute to the active site. Residues 210–416 (WTMARFVDQE…LGIAHEMVMR (207 aa)) enclose the GMPS ATP-PPase domain. 238–244 (SGGVDST) contributes to the ATP binding site. Residues arginine 311, aspartate 478, lysine 533, and glutamate 539 each coordinate XMP.

As to quaternary structure, homodimer. Requires Mg(2+) as cofactor.

It localises to the cytoplasm. Its subcellular location is the cytosol. The catalysed reaction is XMP + L-glutamine + ATP + H2O = GMP + L-glutamate + AMP + diphosphate + 2 H(+). The protein operates within purine metabolism; GMP biosynthesis; GMP from XMP (L-Gln route): step 1/1. Functionally, catalyzes the conversion of xanthine monophosphate (XMP) to GMP in the presence of glutamine and ATP through an adenyl-XMP intermediate. This chain is GMP synthase [glutamine-hydrolyzing] (gua1), found in Aspergillus oryzae (strain ATCC 42149 / RIB 40) (Yellow koji mold).